The chain runs to 137 residues: CUB domain-containing protein (137 aa).

Positions 1 to 21 are cleaved as a signal peptide; the sequence is MRLSRAFAWPLLCSIATTVKA. 2 disulfides stabilise this stretch: Cys30–Cys51 and Cys75–Cys96. The 103-residue stretch at 30 to 132 folds into the CUB domain; that stretch reads CGGHYTDEYG…TFFEIYYFVD (103 aa).

This Homo sapiens (Human) protein is CUB domain-containing protein.